A 330-amino-acid polypeptide reads, in one-letter code: L-asparaginase (330 aa).

The Asparaginase/glutaminase domain maps to 4-330; that stretch reads PQVTILATGG…EAIQKIFSTY (327 aa). Thr-14 serves as the catalytic O-isoaspartyl threonine intermediate. 93–94 is a binding site for substrate; the sequence is TD.

The protein belongs to the asparaginase 1 family. Homotetramer.

It is found in the cytoplasm. It carries out the reaction L-asparagine + H2O = L-aspartate + NH4(+). In Wolinella succinogenes (strain ATCC 29543 / DSM 1740 / CCUG 13145 / JCM 31913 / LMG 7466 / NCTC 11488 / FDC 602W) (Vibrio succinogenes), this protein is L-asparaginase (ansA).